A 145-amino-acid chain; its full sequence is Superoxide dismutase [Cu-Zn] (145 aa).

3 residues coordinate Cu cation: His-37, His-39, and His-54. A disulfide bond links Cys-48 and Cys-137. Zn(2+) contacts are provided by His-54, His-62, His-71, and Asp-74. His-111 contributes to the Cu cation binding site.

Belongs to the Cu-Zn superoxide dismutase family. Homodimer. It depends on Cu cation as a cofactor. Requires Zn(2+) as cofactor.

The protein resides in the cytoplasm. The catalysed reaction is 2 superoxide + 2 H(+) = H2O2 + O2. Functionally, destroys radicals which are normally produced within the cells and which are toxic to biological systems. The sequence is that of Superoxide dismutase [Cu-Zn] from Drosophila busckii (Fruit fly).